Here is a 465-residue protein sequence, read N- to C-terminus: Probable oxidoreductase AIM17 (465 aa).

The transit peptide at 1-16 (MLRSNLCRGSRILARL) directs the protein to the mitochondrion. His-246, Asp-248, and His-428 together coordinate Fe cation.

It belongs to the gamma-BBH/TMLD family. Fe(2+) serves as cofactor. The cofactor is L-ascorbate.

Its subcellular location is the mitochondrion. In Saccharomyces cerevisiae (strain ATCC 204508 / S288c) (Baker's yeast), this protein is Probable oxidoreductase AIM17 (AIM17).